A 217-amino-acid chain; its full sequence is Large ribosomal subunit protein uL1 (217 aa).

The protein belongs to the universal ribosomal protein uL1 family. In terms of assembly, part of the 50S ribosomal subunit.

Binds directly to 23S rRNA. Probably involved in E site tRNA release. Functionally, protein L1 is also a translational repressor protein, it controls the translation of its operon by binding to its mRNA. This chain is Large ribosomal subunit protein uL1, found in Hyperthermus butylicus (strain DSM 5456 / JCM 9403 / PLM1-5).